Consider the following 220-residue polypeptide: ATP-dependent dethiobiotin synthetase BioD (220 aa).

Gly-11–Phe-16 serves as a coordination point for ATP. Residue Thr-15 coordinates Mg(2+). The active site involves Lys-36. Thr-40 is a binding site for substrate. ATP contacts are provided by residues Asp-48 and Glu-107–Gly-110. Mg(2+)-binding residues include Asp-48 and Glu-107.

It belongs to the dethiobiotin synthetase family. In terms of assembly, homodimer. Requires Mg(2+) as cofactor.

It localises to the cytoplasm. The catalysed reaction is (7R,8S)-7,8-diammoniononanoate + CO2 + ATP = (4R,5S)-dethiobiotin + ADP + phosphate + 3 H(+). The protein operates within cofactor biosynthesis; biotin biosynthesis; biotin from 7,8-diaminononanoate: step 1/2. In terms of biological role, catalyzes a mechanistically unusual reaction, the ATP-dependent insertion of CO2 between the N7 and N8 nitrogen atoms of 7,8-diaminopelargonic acid (DAPA, also called 7,8-diammoniononanoate) to form a ureido ring. In Aquifex aeolicus (strain VF5), this protein is ATP-dependent dethiobiotin synthetase BioD.